Consider the following 607-residue polypeptide: Albumin B (607 aa).

Residues 1-18 form the signal peptide; the sequence is MKWITLICLLISSSFIES. A propeptide spanning residues 19–24 is cleaved from the precursor; sequence RILFKR. 3 consecutive Albumin domains span residues 22–209, 210–402, and 403–600; these read FKRD…KQLM, KQSH…RFMN, and EAKE…VLIE. A Cu cation-binding site is contributed by His30. Intrachain disulfides connect Cys80-Cys88, Cys101-Cys117, Cys116-Cys127, Cys147-Cys192, Cys191-Cys200, Cys223-Cys269, Cys268-Cys276, Cys288-Cys302, Cys301-Cys312, Cys339-Cys384, Cys383-Cys392, Cys415-Cys461, Cys460-Cys471, Cys484-Cys500, Cys499-Cys510, Cys537-Cys582, and Cys581-Cys590.

This sequence belongs to the ALB/AFP/VDB family. Plasma.

It localises to the secreted. Functionally, serum albumin, the main protein of plasma, has a good binding capacity for water, Ca(2+), Na(+), K(+), fatty acids, hormones, bilirubin and drugs. Its main function is the regulation of the colloidal osmotic pressure of blood. The polypeptide is Albumin B (alb-b) (Xenopus laevis (African clawed frog)).